The primary structure comprises 121 residues: Small ribosomal subunit protein uS13 (121 aa).

A disordered region spans residues histidine 91 to lysine 121.

It belongs to the universal ribosomal protein uS13 family. As to quaternary structure, part of the 30S ribosomal subunit. Forms a loose heterodimer with protein S19. Forms two bridges to the 50S subunit in the 70S ribosome.

In terms of biological role, located at the top of the head of the 30S subunit, it contacts several helices of the 16S rRNA. In the 70S ribosome it contacts the 23S rRNA (bridge B1a) and protein L5 of the 50S subunit (bridge B1b), connecting the 2 subunits; these bridges are implicated in subunit movement. Contacts the tRNAs in the A and P-sites. The chain is Small ribosomal subunit protein uS13 from Bordetella avium (strain 197N).